The sequence spans 190 residues: NADH-quinone oxidoreductase subunit B (190 aa).

The [4Fe-4S] cluster site is built by cysteine 39, cysteine 40, cysteine 104, and cysteine 135.

This sequence belongs to the complex I 20 kDa subunit family. NDH-1 is composed of 14 different subunits. Subunits NuoB, C, D, E, F, and G constitute the peripheral sector of the complex. [4Fe-4S] cluster serves as cofactor.

Its subcellular location is the cell inner membrane. The catalysed reaction is a quinone + NADH + 5 H(+)(in) = a quinol + NAD(+) + 4 H(+)(out). NDH-1 shuttles electrons from NADH, via FMN and iron-sulfur (Fe-S) centers, to quinones in the respiratory chain. The immediate electron acceptor for the enzyme in this species is believed to be a menaquinone. Couples the redox reaction to proton translocation (for every two electrons transferred, four hydrogen ions are translocated across the cytoplasmic membrane), and thus conserves the redox energy in a proton gradient. In Chlorobium chlorochromatii (strain CaD3), this protein is NADH-quinone oxidoreductase subunit B.